A 118-amino-acid chain; its full sequence is Large ribosomal subunit protein uL24 (118 aa).

This sequence belongs to the universal ribosomal protein uL24 family. Part of the 50S ribosomal subunit.

In terms of biological role, one of two assembly initiator proteins, it binds directly to the 5'-end of the 23S rRNA, where it nucleates assembly of the 50S subunit. Functionally, one of the proteins that surrounds the polypeptide exit tunnel on the outside of the subunit. This is Large ribosomal subunit protein uL24 from Prochlorococcus marinus (strain MIT 9301).